A 738-amino-acid chain; its full sequence is 1,4-alpha-glucan branching enzyme GlgB (738 aa).

The active-site Nucleophile is aspartate 417. Glutamate 472 (proton donor) is an active-site residue.

It belongs to the glycosyl hydrolase 13 family. GlgB subfamily. In terms of assembly, monomer.

It carries out the reaction Transfers a segment of a (1-&gt;4)-alpha-D-glucan chain to a primary hydroxy group in a similar glucan chain.. It participates in glycan biosynthesis; glycogen biosynthesis. Functionally, catalyzes the formation of the alpha-1,6-glucosidic linkages in glycogen by scission of a 1,4-alpha-linked oligosaccharide from growing alpha-1,4-glucan chains and the subsequent attachment of the oligosaccharide to the alpha-1,6 position. The protein is 1,4-alpha-glucan branching enzyme GlgB of Burkholderia pseudomallei (strain 1106a).